The following is a 375-amino-acid chain: Peritrophin-48 (375 aa).

A signal peptide spans 1–20 (MIIKTLLASVAIMLIATVNA). Chitin-binding type-2 domains follow at residues 25–83 (AKYC…NCIL), 86–143 (DNPC…SDDD), 153–210 (LNIC…MCER), 224–292 (ETLC…GCNR), and 294–360 (EYTT…ACQN). Cysteines 60 and 73 form a disulfide. A glycan (N-linked (GlcNAc...) asparagine) is linked at N117. 4 disulfide bridges follow: C120/C133, C187/C200, C265/C278, and C330/C343. N360 is a glycosylation site (N-linked (GlcNAc...) asparagine).

Post-translationally, glycosylated. In terms of tissue distribution, cardia and midgut peritrophic membrane.

In terms of biological role, may bind chitin or related oligosaccharide structures. This is Peritrophin-48 from Lucilia cuprina (Green bottle fly).